Consider the following 336-residue polypeptide: Nuclear egress protein 2 (336 aa).

Over 1 to 315 (MASPEERLLD…AWRYSWRATP (315 aa)) the chain is Perinuclear space. Disordered stretches follow at residues 193-221 (RSGQ…GCLG) and 277-297 (RTRE…VPPE). Positions 277–288 (RTRETRRMRGSH) are enriched in basic residues. Residues 316-333 (YLARVLAVTAVALLLMFL) form a helical membrane-spanning segment. Residues 334-336 (RWT) are Nuclear-facing.

It belongs to the herpesviridae NEC2 protein family. As to quaternary structure, forms a heterodimeric viral nuclear egress complex (NEC) with NEC1. Interacts with host IKBKE; this interaction inhibits host IKBKE kinase activity and IRF3 nuclear translocation. Phosphorylated.

Its subcellular location is the host nucleus inner membrane. It localises to the host cytoplasm. The protein localises to the host perinuclear region. Its function is as follows. Plays an essential role in virion nuclear egress, the first step of virion release from infected cell. Within the host nucleus, NEC1 interacts with the newly formed capsid through the vertexes and directs it to the inner nuclear membrane by associating with NEC2. Induces the budding of the capsid at the inner nuclear membrane as well as its envelopment into the perinuclear space. There, the NEC1/NEC2 complex promotes the fusion of the enveloped capsid with the outer nuclear membrane and the subsequent release of the viral capsid into the cytoplasm where it will reach the secondary budding sites in the host Golgi or trans-Golgi network. Inhibits host IKBKE and IRF3, thereby impairing type I IFN signaling. The protein is Nuclear egress protein 2 of Homo sapiens (Human).